The sequence spans 277 residues: Caspase-3 (277 aa).

Methionine 1 carries the N-acetylmethionine modification. 2 propeptides span residues 1–9 and 10–28; these read MENTENSVD and AKSF…KSMD. Lysine 11 is modified (N6-acetyllysine). A Phosphoserine modification is found at serine 26. Residues histidine 121 and cysteine 163 contribute to the active site. Residue cysteine 163 is modified to S-nitrosocysteine; in inhibited form.

It belongs to the peptidase C14A family. In terms of assembly, heterotetramer that consists of two anti-parallel arranged heterodimers, each one formed by a 17 kDa (p17) and a 12 kDa (p12) subunit. Interacts with BIRC6/bruce. Post-translationally, cleavage by granzyme B, caspase-6, caspase-8 and caspase-10 generates the two active subunits. Additional processing of the propeptides is likely due to the autocatalytic activity of the activated protease. Active heterodimers between the small subunit of caspase-7 protease and the large subunit of caspase-3 also occur and vice versa. In terms of processing, S-nitrosylated on its catalytic site cysteine in unstimulated cell lines and denitrosylated upon activation of the Fas apoptotic pathway, associated with an increase in intracellular caspase activity. Fas therefore activates caspase-3 not only by inducing the cleavage of the caspase zymogen to its active subunits, but also by stimulating the denitrosylation of its active site thiol. Ubiquitinated by BIRC6; this activity is inhibited by DIABLO/SMAC.

It is found in the cytoplasm. The catalysed reaction is Strict requirement for an Asp residue at positions P1 and P4. It has a preferred cleavage sequence of Asp-Xaa-Xaa-Asp-|- with a hydrophobic amino-acid residue at P2 and a hydrophilic amino-acid residue at P3, although Val or Ala are also accepted at this position.. Inhibited by BIRC6; following inhibition of BIRC6-caspase binding by DIABLO/SMAC, BIRC6 is subjected to caspase cleavage, leading to an increase in active caspases. Its function is as follows. Involved in the activation cascade of caspases responsible for apoptosis execution. At the onset of apoptosis, it proteolytically cleaves poly(ADP-ribose) polymerase PARP1 at a '216-Asp-|-Gly-217' bond. Cleaves and activates sterol regulatory element binding proteins (SREBPs) between the basic helix-loop-helix leucine zipper domain and the membrane attachment domain. Cleaves and activates caspase-6, -7 and -9 (CASP6, CASP7 and CASP9, respectively). Cleaves and inactivates interleukin-18 (IL18). Triggers cell adhesion in sympathetic neurons through RET cleavage. Cleaves IL-1 beta between an Asp and an Ala, releasing the mature cytokine which is involved in a variety of inflammatory processes. Cleaves and inhibits serine/threonine-protein kinase AKT1 in response to oxidative stress. Acts as an inhibitor of type I interferon production during virus-induced apoptosis by mediating cleavage of antiviral proteins CGAS, IRF3 and MAVS, thereby preventing cytokine overproduction. Also involved in pyroptosis by mediating cleavage and activation of gasdermin-E (GSDME). Cleaves XRCC4 and phospholipid scramblase proteins XKR4, XKR8 and XKR9, leading to promote phosphatidylserine exposure on apoptotic cell surface. Cleaves BIRC6 following inhibition of BIRC6-caspase binding by DIABLO/SMAC. This is Caspase-3 (CASP3) from Canis lupus familiaris (Dog).